Consider the following 196-residue polypeptide: Peptide methionine sulfoxide reductase (196 aa).

Positions 1 to 14 (MEGNNSSSKSTTNP) are enriched in polar residues. The segment at 1–23 (MEGNNSSSKSTTNPALDPDLDSP) is disordered.

This sequence belongs to the MsrA Met sulfoxide reductase family.

The catalysed reaction is L-methionyl-[protein] + [thioredoxin]-disulfide + H2O = L-methionyl-(S)-S-oxide-[protein] + [thioredoxin]-dithiol. It catalyses the reaction [thioredoxin]-disulfide + L-methionine + H2O = L-methionine (S)-S-oxide + [thioredoxin]-dithiol. In terms of biological role, has an important function as a repair enzyme for proteins that have been inactivated by oxidation. Catalyzes the reversible oxidation-reduction of methionine sulfoxide in proteins to methionine. The protein is Peptide methionine sulfoxide reductase (E4) of Solanum lycopersicum (Tomato).